Here is a 279-residue protein sequence, read N- to C-terminus: uncharacterized protein (279 aa).

2 disordered regions span residues 50–109 (YTYN…YNKN) and 249–279 (SQSQPSSFSSSSSSSSIQLSPSPSSSSSPKL). Low complexity predominate over residues 68 to 109 (NNNSNYNNNNNNNNNNNNNNNNNNNNNNNKNNNNNNYNYNKN).

This is an uncharacterized protein from Dictyostelium discoideum (Social amoeba).